Reading from the N-terminus, the 503-residue chain is Lysine--tRNA ligase (503 aa).

The Mg(2+) site is built by glutamate 414 and glutamate 421.

The protein belongs to the class-II aminoacyl-tRNA synthetase family. As to quaternary structure, homodimer. Requires Mg(2+) as cofactor.

Its subcellular location is the cytoplasm. The catalysed reaction is tRNA(Lys) + L-lysine + ATP = L-lysyl-tRNA(Lys) + AMP + diphosphate. The polypeptide is Lysine--tRNA ligase (Neisseria meningitidis serogroup A / serotype 4A (strain DSM 15465 / Z2491)).